A 318-amino-acid polypeptide reads, in one-letter code: Electron transfer flavoprotein subunit alpha (318 aa).

257 to 285 serves as a coordination point for FAD; the sequence is LYIALGISGAIQHRAGMQTSKTIVAVNKD.

It belongs to the ETF alpha-subunit/FixB family. As to quaternary structure, heterodimer of an alpha and a beta subunit. Requires FAD as cofactor.

Functionally, the electron transfer flavoprotein serves as a specific electron acceptor for other dehydrogenases. It transfers the electrons to the main respiratory chain via ETF-ubiquinone oxidoreductase (ETF dehydrogenase). The polypeptide is Electron transfer flavoprotein subunit alpha (etfA) (Mycobacterium tuberculosis (strain CDC 1551 / Oshkosh)).